The primary structure comprises 227 residues: Uracil phosphoribosyltransferase (227 aa).

GTP is bound at residue 36–40 (KGLVK). 5-phospho-alpha-D-ribose 1-diphosphate contacts are provided by residues Arg-86, Arg-111, and 145 to 153 (DPMLATGST). Uracil is bound by residues Ile-212 and 217–219 (GDA). Asp-218 provides a ligand contact to 5-phospho-alpha-D-ribose 1-diphosphate.

This sequence belongs to the UPRTase family. Mg(2+) is required as a cofactor.

The catalysed reaction is UMP + diphosphate = 5-phospho-alpha-D-ribose 1-diphosphate + uracil. It functions in the pathway pyrimidine metabolism; UMP biosynthesis via salvage pathway; UMP from uracil: step 1/1. Its activity is regulated as follows. Allosterically activated by GTP. Functionally, catalyzes the conversion of uracil and 5-phospho-alpha-D-ribose 1-diphosphate (PRPP) to UMP and diphosphate. The chain is Uracil phosphoribosyltransferase from Halobacterium salinarum (strain ATCC 700922 / JCM 11081 / NRC-1) (Halobacterium halobium).